A 158-amino-acid chain; its full sequence is NAD(P)H-quinone oxidoreductase subunit J, chloroplastic (158 aa).

The protein belongs to the complex I 30 kDa subunit family. In terms of assembly, NDH is composed of at least 16 different subunits, 5 of which are encoded in the nucleus.

It is found in the plastid. Its subcellular location is the chloroplast thylakoid membrane. It catalyses the reaction a plastoquinone + NADH + (n+1) H(+)(in) = a plastoquinol + NAD(+) + n H(+)(out). The catalysed reaction is a plastoquinone + NADPH + (n+1) H(+)(in) = a plastoquinol + NADP(+) + n H(+)(out). Functionally, NDH shuttles electrons from NAD(P)H:plastoquinone, via FMN and iron-sulfur (Fe-S) centers, to quinones in the photosynthetic chain and possibly in a chloroplast respiratory chain. The immediate electron acceptor for the enzyme in this species is believed to be plastoquinone. Couples the redox reaction to proton translocation, and thus conserves the redox energy in a proton gradient. The sequence is that of NAD(P)H-quinone oxidoreductase subunit J, chloroplastic from Arabis hirsuta (Hairy rock-cress).